Reading from the N-terminus, the 92-residue chain is Movement protein (92 aa).

The chain crosses the membrane as a helical span at residues valine 38 to phenylalanine 58.

Belongs to the mastrevirus movement protein family. In terms of assembly, interacts with the capsid protein (CP). Part of a MP-CP-viral DNA complex.

The protein resides in the host membrane. Its function is as follows. Involved in the viral transport within, and between cells. The polypeptide is Movement protein (Phaseolus vulgaris (Kidney bean)).